The chain runs to 550 residues: MDQRRLVLFLVFSLSLVMLWNAWLKQSQPAPTAVTATAGVEGAGVPTPTTGVAPGATTAVPGVPGAATASTAPRMVVRTDLMVAEVSAQGGDIVRLELAQHKATADKTKNFVLFDDGTIHLYAAQSGLIGEDLPTHKTTFALPQGEQVLKEGEDRLVVRLEAPEQDGVKVTKVMTFHRGNYLVDVAYEIVNSSERTLSPHAYYQLTRDGKPAESVEAFGVTTFTGPAFYTDAEKFQKVQFEEIAEGKAKFVKKASDGWIAMVQHYFVSAWLPQGGTEREFFAQKVGNDLYSAGVIVPVAAIQPGQSGRVEASLYAGPQEQDKLEDIAPGLDLVVDYGWLTVIAAPLFWVLSWIHGVVGNWGWAIIIVTILIKLMFFPLSAASYKSMAKMRVLGPRMQRLKELYGNDKAKMQQEMMEMYRKEKINPLGGCLPILVQIPVFISLYWVLLGSVEMRQAPWLGWIQDLSAKDPYFILPVIMGVSMLIQMKLNPTPPDPIQAKVMMAMPVIFTFMFLWFPSGLVLYWVVNNILSIAQQWQITRMIESEKSGAKPA.

6 helical membrane passes run leucine 6–glutamine 26, valine 333–isoleucine 353, valine 356–phenylalanine 376, leucine 430–valine 450, proline 469–proline 489, and proline 504–valine 524.

Belongs to the OXA1/ALB3/YidC family. Type 1 subfamily. As to quaternary structure, interacts with the Sec translocase complex via SecD. Specifically interacts with transmembrane segments of nascent integral membrane proteins during membrane integration.

It is found in the cell inner membrane. Functionally, required for the insertion and/or proper folding and/or complex formation of integral membrane proteins into the membrane. Involved in integration of membrane proteins that insert both dependently and independently of the Sec translocase complex, as well as at least some lipoproteins. Aids folding of multispanning membrane proteins. This chain is Membrane protein insertase YidC, found in Aromatoleum aromaticum (strain DSM 19018 / LMG 30748 / EbN1) (Azoarcus sp. (strain EbN1)).